A 498-amino-acid chain; its full sequence is N-succinylglutamate 5-semialdehyde dehydrogenase 1 (498 aa).

231-236 (GSSNTG) provides a ligand contact to NAD(+). Active-site residues include Glu-254 and Cys-288.

Belongs to the aldehyde dehydrogenase family. AstD subfamily.

The enzyme catalyses N-succinyl-L-glutamate 5-semialdehyde + NAD(+) + H2O = N-succinyl-L-glutamate + NADH + 2 H(+). The protein operates within amino-acid degradation; L-arginine degradation via AST pathway; L-glutamate and succinate from L-arginine: step 4/5. Catalyzes the NAD-dependent reduction of succinylglutamate semialdehyde into succinylglutamate. The polypeptide is N-succinylglutamate 5-semialdehyde dehydrogenase 1 (Shewanella denitrificans (strain OS217 / ATCC BAA-1090 / DSM 15013)).